We begin with the raw amino-acid sequence, 359 residues long: Threonine dehydratase biosynthetic, chloroplastic (359 aa).

2 consecutive ACT-like domains span residues 184-256 (ALLA…NFSH) and 278-349 (IFGE…LDNS).

This sequence belongs to the serine/threonine dehydratase family. Homotetramer. Pyridoxal 5'-phosphate serves as cofactor. As to expression, floral buds of untreated plants. After ABA treatment or mechanical wounding is mostly accumulated in leaves, to a lesser extent in stems, but not in roots. Expressed in anthers, carpel leaves, pith cells, sepals and petals. Not expressed in stomium, vascular bundles, epidermal cells or pollen mother cells.

It localises to the plastid. The protein resides in the chloroplast. The enzyme catalyses L-threonine = 2-oxobutanoate + NH4(+). The protein operates within amino-acid biosynthesis; L-isoleucine biosynthesis; 2-oxobutanoate from L-threonine: step 1/1. The sequence is that of Threonine dehydratase biosynthetic, chloroplastic from Solanum tuberosum (Potato).